The chain runs to 105 residues: Large ribosomal subunit protein uL24 (105 aa).

Belongs to the universal ribosomal protein uL24 family. As to quaternary structure, part of the 50S ribosomal subunit.

In terms of biological role, one of two assembly initiator proteins, it binds directly to the 5'-end of the 23S rRNA, where it nucleates assembly of the 50S subunit. One of the proteins that surrounds the polypeptide exit tunnel on the outside of the subunit. The protein is Large ribosomal subunit protein uL24 of Aeromonas salmonicida (strain A449).